We begin with the raw amino-acid sequence, 208 residues long: Large ribosomal subunit protein uL3 (208 aa).

A disordered region spans residues 123–147 (RHGQSRGPMAHGSRYHRRPGSMGPV).

It belongs to the universal ribosomal protein uL3 family. Part of the 50S ribosomal subunit. Forms a cluster with proteins L14 and L19.

Its function is as follows. One of the primary rRNA binding proteins, it binds directly near the 3'-end of the 23S rRNA, where it nucleates assembly of the 50S subunit. This Streptococcus gordonii (strain Challis / ATCC 35105 / BCRC 15272 / CH1 / DL1 / V288) protein is Large ribosomal subunit protein uL3.